The following is a 292-amino-acid chain: NAD kinase (292 aa).

D73 acts as the Proton acceptor in catalysis. NAD(+) contacts are provided by residues 73–74 (DG), 147–148 (NE), H158, R175, D177, 188–193 (TAYSLS), and Q247.

It belongs to the NAD kinase family. A divalent metal cation serves as cofactor.

It is found in the cytoplasm. The enzyme catalyses NAD(+) + ATP = ADP + NADP(+) + H(+). Involved in the regulation of the intracellular balance of NAD and NADP, and is a key enzyme in the biosynthesis of NADP. Catalyzes specifically the phosphorylation on 2'-hydroxyl of the adenosine moiety of NAD to yield NADP. This Escherichia coli (strain SMS-3-5 / SECEC) protein is NAD kinase.